Reading from the N-terminus, the 592-residue chain is Bifunctional dolabella-3,7-dien-18-ol synthase/dolathalia-3,7,11-triene synthase TPS20, chloroplastic (592 aa).

A chloroplast-targeting transit peptide spans 1–52 (MEAITKNGSLSQTLVHCGPKSLSSFIPVRCLRFSKNPFPKKLVVTRARTSIN). Mg(2+) is bound by residues Asp349, Asp353, Asp491, Thr495, and Glu499. Residues 349–353 (DDLYD) carry the DDXXD motif motif.

This sequence belongs to the terpene synthase family. Tpsa subfamily. Mg(2+) is required as a cofactor. It depends on Mn(2+) as a cofactor.

It localises to the plastid. The protein localises to the chloroplast. It catalyses the reaction (2E,6E,10E)-geranylgeranyl diphosphate + H2O = (3E,7E)-dolabella-3,7-dien-18-ol + diphosphate. It carries out the reaction (2E,6E,10E)-geranylgeranyl diphosphate = (3E,7E)-dolathalia-3,7,11-triene + diphosphate. It functions in the pathway secondary metabolite biosynthesis; terpenoid biosynthesis. Its function is as follows. Involved in the biosynthesis of diterpenes in roots. Possesses dolabella-3,7-dien-18-ol synthase activity and dolathalia-3,7,11-triene synthase activity in vitro. Catalyzes the formation of dolabella-3,7-dien-18-ol and dolathalia-3,7,11-triene from geranygeranyl diphosphate (GGPP). Does not seem to be involved in sesquiterpene biosynthesis. The polypeptide is Bifunctional dolabella-3,7-dien-18-ol synthase/dolathalia-3,7,11-triene synthase TPS20, chloroplastic (Arabidopsis thaliana (Mouse-ear cress)).